The following is a 185-amino-acid chain: Ribosome-recycling factor (185 aa).

It belongs to the RRF family.

The protein resides in the cytoplasm. In terms of biological role, responsible for the release of ribosomes from messenger RNA at the termination of protein biosynthesis. May increase the efficiency of translation by recycling ribosomes from one round of translation to another. This chain is Ribosome-recycling factor, found in Chloroflexus aurantiacus (strain ATCC 29364 / DSM 637 / Y-400-fl).